We begin with the raw amino-acid sequence, 235 residues long: Small ribosomal subunit protein uS3 (235 aa).

One can recognise a KH type-2 domain in the interval 39–107 (VRQFLNKELA…PAQINIAEVK (69 aa)). The disordered stretch occupies residues 216 to 235 (QPEQQPTDKPKKVPRGKGRK).

It belongs to the universal ribosomal protein uS3 family. As to quaternary structure, part of the 30S ribosomal subunit. Forms a tight complex with proteins S10 and S14.

In terms of biological role, binds the lower part of the 30S subunit head. Binds mRNA in the 70S ribosome, positioning it for translation. The sequence is that of Small ribosomal subunit protein uS3 from Aggregatibacter actinomycetemcomitans (Actinobacillus actinomycetemcomitans).